The following is a 152-amino-acid chain: Deoxyuridine 5'-triphosphate nucleotidohydrolase (152 aa).

Substrate contacts are provided by residues 71–73, Asn84, 88–90, and Met98; these read RSG and LVD.

Belongs to the dUTPase family. Mg(2+) serves as cofactor.

It carries out the reaction dUTP + H2O = dUMP + diphosphate + H(+). It participates in pyrimidine metabolism; dUMP biosynthesis; dUMP from dCTP (dUTP route): step 2/2. Functionally, this enzyme is involved in nucleotide metabolism: it produces dUMP, the immediate precursor of thymidine nucleotides and it decreases the intracellular concentration of dUTP so that uracil cannot be incorporated into DNA. This Shewanella oneidensis (strain ATCC 700550 / JCM 31522 / CIP 106686 / LMG 19005 / NCIMB 14063 / MR-1) protein is Deoxyuridine 5'-triphosphate nucleotidohydrolase.